The sequence spans 500 residues: Glycerol kinase (500 aa).

Position 12 (Thr12) interacts with ADP. Positions 12, 13, and 14 each coordinate ATP. Residue Thr12 participates in sn-glycerol 3-phosphate binding. Residue Arg16 participates in ADP binding. 4 residues coordinate sn-glycerol 3-phosphate: Arg82, Glu83, Tyr134, and Asp243. Glycerol contacts are provided by Arg82, Glu83, Tyr134, Asp243, and Gln244. Thr265 and Gly308 together coordinate ADP. The ATP site is built by Thr265, Gly308, Gln312, and Gly411. An ADP-binding site is contributed by Gly411.

This sequence belongs to the FGGY kinase family.

The catalysed reaction is glycerol + ATP = sn-glycerol 3-phosphate + ADP + H(+). The protein operates within polyol metabolism; glycerol degradation via glycerol kinase pathway; sn-glycerol 3-phosphate from glycerol: step 1/1. Inhibited by fructose 1,6-bisphosphate (FBP). Its function is as follows. Key enzyme in the regulation of glycerol uptake and metabolism. Catalyzes the phosphorylation of glycerol to yield sn-glycerol 3-phosphate. The polypeptide is Glycerol kinase (Chelativorans sp. (strain BNC1)).